A 296-amino-acid polypeptide reads, in one-letter code: Cholesterol ring-cleaving hydrolase IpdA subunit (296 aa).

It belongs to the 3-oxoacid CoA-transferase subunit A family. As to quaternary structure, heterotetramer composed of 2 IpdA subunits and 2 IpdB subunits.

It carries out the reaction (3E)-2-(2-carboxylatoethyl)-3-methyl-6-oxocyclohex-1-ene-1-carboxyl-CoA + H2O = 6-methyl-3,7-dioxodecanedioyl-CoA. The protein operates within steroid metabolism; cholesterol degradation. Functionally, involved in the final steps of cholesterol and steroid degradation. Opens the last steroid ring of cholesterol by catalyzing the hydrolysis of (3E)-2-(2-carboxylatoethyl)-3-methyl-6-oxocyclohex-1-ene-1-carboxyl-CoA (COCHEA-CoA) to 6-methyl-3,7-dioxodecanedioyl-CoA (MeDODA-CoA). This is Cholesterol ring-cleaving hydrolase IpdA subunit from Rhodococcus jostii (strain RHA1).